A 492-amino-acid polypeptide reads, in one-letter code: Trigger factor (492 aa).

The interval 77–96 is disordered; that stretch reads EILSSRGEKSATQPAISMTE. The PPIase FKBP-type domain maps to 169–254; it reads GDRVTMNYLG…VKEVAAAAAV (86 aa). Residues 439-492 are disordered; the sequence is ELLADDGEEETETKKKAPAKKKAAAKADDAAEGEEAAPKKKAPAKKKATEADAE.

It belongs to the FKBP-type PPIase family. Tig subfamily.

The protein resides in the cytoplasm. It catalyses the reaction [protein]-peptidylproline (omega=180) = [protein]-peptidylproline (omega=0). Functionally, involved in protein export. Acts as a chaperone by maintaining the newly synthesized protein in an open conformation. Functions as a peptidyl-prolyl cis-trans isomerase. The protein is Trigger factor of Agrobacterium fabrum (strain C58 / ATCC 33970) (Agrobacterium tumefaciens (strain C58)).